A 519-amino-acid chain; its full sequence is 2-isopropylmalate synthase (519 aa).

The region spanning 5 to 267 (VIIFDTTLRD…QTRINHKEIY (263 aa)) is the Pyruvate carboxyltransferase domain. Aspartate 14, histidine 202, histidine 204, and asparagine 238 together coordinate Mn(2+). The regulatory domain stretch occupies residues 392-519 (VMNYFNTQSG…RKHHTTQEAV (128 aa)).

It belongs to the alpha-IPM synthase/homocitrate synthase family. LeuA type 1 subfamily. In terms of assembly, homodimer. The cofactor is Mn(2+).

It localises to the cytoplasm. It catalyses the reaction 3-methyl-2-oxobutanoate + acetyl-CoA + H2O = (2S)-2-isopropylmalate + CoA + H(+). The protein operates within amino-acid biosynthesis; L-leucine biosynthesis; L-leucine from 3-methyl-2-oxobutanoate: step 1/4. Functionally, catalyzes the condensation of the acetyl group of acetyl-CoA with 3-methyl-2-oxobutanoate (2-ketoisovalerate) to form 3-carboxy-3-hydroxy-4-methylpentanoate (2-isopropylmalate). The sequence is that of 2-isopropylmalate synthase from Proteus mirabilis (strain HI4320).